The following is a 367-amino-acid chain: tRNA/tmRNA (uracil-C(5))-methyltransferase (367 aa).

S-adenosyl-L-methionine is bound by residues glutamine 190, tyrosine 218, asparagine 223, glutamate 239, and aspartate 299. The Nucleophile role is filled by cysteine 324. Glutamate 358 (proton acceptor) is an active-site residue.

Belongs to the class I-like SAM-binding methyltransferase superfamily. RNA M5U methyltransferase family. TrmA subfamily.

It carries out the reaction uridine(54) in tRNA + S-adenosyl-L-methionine = 5-methyluridine(54) in tRNA + S-adenosyl-L-homocysteine + H(+). It catalyses the reaction uridine(341) in tmRNA + S-adenosyl-L-methionine = 5-methyluridine(341) in tmRNA + S-adenosyl-L-homocysteine + H(+). Dual-specificity methyltransferase that catalyzes the formation of 5-methyluridine at position 54 (m5U54) in all tRNAs, and that of position 341 (m5U341) in tmRNA (transfer-mRNA). The protein is tRNA/tmRNA (uracil-C(5))-methyltransferase of Musicola paradisiaca (strain Ech703) (Dickeya paradisiaca).